The primary structure comprises 699 residues: SPS-sensor serine protease component SSY5 (699 aa).

2 disordered regions span residues 1-113 and 128-158; these read MVRF…LQGF and PVKE…ENAR. The propeptide occupies 1–381; sequence MVRFFGLNKK…YCVKDYIKKA (381 aa). Polar residues predominate over residues 24–38; that stretch reads NEQNAAETSSSNVSG. A compositionally biased stretch (basic and acidic residues) spans 39–51; the sequence is NEERIDPNSHDTN. Residues 61–78 show a composition bias toward low complexity; it reads STTFGSSIQSSSIFSRGR. A compositionally biased stretch (polar residues) spans 83–93; the sequence is TGASSSMATSE. 2 stretches are compositionally biased toward low complexity: residues 97-109 and 144-154; these read HSSG…NSKN and SSSTSSTLATS. Residues 459 to 699 form a serine protease region; sequence FAITCAHVVL…QWDIDPQLDG (241 aa). Residues histidine 465, aspartate 545, and serine 640 each act as charge relay system in the active site.

This sequence belongs to the peptidase S64 family. In terms of assembly, component of the plasma membrane SPS (SSY1-PTR3-SSY5) amino acid sensor complex. In terms of processing, the propeptide is autoproteolytically cleaved from the catalytic domain but remains associated, forming an inactive protease complex. This processing occurs even in the absence of signaling.

It is found in the cell membrane. Functionally, protease component of the SPS-sensor system, which regulates the expression of several amino acid-metabolizing enzymes and amino acid- and peptide-permeases in response to extracellular amino acid levels by controlling the activity of two transcription factors, STP1 and STP2. Catalyzes the activation of these transcription factors, which are synthesized as latent cytoplasmic precursors, by proteolytic removal of an N-terminal inhibitory domain containing cytoplasmic retention motifs. SSY5 binds as an inactive protease complex to STP1. In response to extracellular amino acids and dependent on the other SPS-sensor components, the inhibitory propeptide is induced to dissociate, and thereby enables the catalytic domain to process STP1. The polypeptide is SPS-sensor serine protease component SSY5 (SSY5) (Saccharomyces cerevisiae (strain ATCC 204508 / S288c) (Baker's yeast)).